Reading from the N-terminus, the 211-residue chain is Small ribosomal subunit protein uS3 (211 aa).

Residues 38 to 106 enclose the KH type-2 domain; sequence LRNFLKKRLY…EVYLNIQEVR (69 aa).

Belongs to the universal ribosomal protein uS3 family. As to quaternary structure, part of the 30S ribosomal subunit. Forms a tight complex with proteins S10 and S14.

In terms of biological role, binds the lower part of the 30S subunit head. Binds mRNA in the 70S ribosome, positioning it for translation. The chain is Small ribosomal subunit protein uS3 from Citrifermentans bemidjiense (strain ATCC BAA-1014 / DSM 16622 / JCM 12645 / Bem) (Geobacter bemidjiensis).